Consider the following 100-residue polypeptide: Small ribosomal subunit protein eS24 (100 aa).

Belongs to the eukaryotic ribosomal protein eS24 family.

The sequence is that of Small ribosomal subunit protein eS24 from Methanothermobacter thermautotrophicus (strain ATCC 29096 / DSM 1053 / JCM 10044 / NBRC 100330 / Delta H) (Methanobacterium thermoautotrophicum).